Reading from the N-terminus, the 270-residue chain is Monocyte to macrophage differentiation factor 2 (270 aa).

At 1-38 (MFAPRLLDFQKTKYARFMNHRVPAHKRYQPTEYEHAAN) the chain is on the cytoplasmic side. A helical membrane pass occupies residues 39–59 (CATHAFWIIPSILGSSNLYFL). The Lumenal segment spans residues 60–65 (SDDDWE). Residues 66-86 (TISAWIYGLGLCGLFVVSTVF) traverse the membrane as a helical segment. Residues 87–102 (HTISWKKSHLRMVEHC) are Cytoplasmic-facing. A helical membrane pass occupies residues 103 to 123 (LHMFDRMVIYFFIAASYAPWL). Residues 124–132 (NLRELGPWA) lie on the Lumenal side of the membrane. The chain crosses the membrane as a helical span at residues 133 to 153 (SHMRWLVWIMASVGTIYVFFF). Residues 154 to 182 (HERTGSCVQFLRGEACPKAGTACLPARYK) lie on the Cytoplasmic side of the membrane. A helical transmembrane segment spans residues 183–203 (LVELLCYVVMGFFPALVILSM). Topologically, residues 204-205 (PN) are lumenal. The helical transmembrane segment at 206-226 (TEGIWELVTGGVFYCLGMVFF) threads the bilayer. The Cytoplasmic portion of the chain corresponds to 227–233 (KSDGRIP). The chain crosses the membrane as a helical span at residues 234–254 (FAHAIWHLFVAFGAGTHYYAI). Residues 255–270 (WRYLYLPSTLQTKVSK) are Lumenal-facing.

Belongs to the ADIPOR family. Shows restricted expression with highest levels in brain and testis.

It is found in the golgi apparatus membrane. The protein is Monocyte to macrophage differentiation factor 2 of Homo sapiens (Human).